Here is a 206-residue protein sequence, read N- to C-terminus: Ribosome maturation factor RimP (206 aa).

It belongs to the RimP family.

Its subcellular location is the cytoplasm. Required for maturation of 30S ribosomal subunits. The chain is Ribosome maturation factor RimP from Paracoccus denitrificans (strain Pd 1222).